The primary structure comprises 181 residues: Peptidyl-tRNA hydrolase (181 aa).

Tyr-14 provides a ligand contact to tRNA. The Proton acceptor role is filled by His-19. The tRNA site is built by Tyr-60, Asn-62, and Asn-108.

The protein belongs to the PTH family. As to quaternary structure, monomer.

The protein localises to the cytoplasm. The enzyme catalyses an N-acyl-L-alpha-aminoacyl-tRNA + H2O = an N-acyl-L-amino acid + a tRNA + H(+). In terms of biological role, hydrolyzes ribosome-free peptidyl-tRNAs (with 1 or more amino acids incorporated), which drop off the ribosome during protein synthesis, or as a result of ribosome stalling. Functionally, catalyzes the release of premature peptidyl moieties from peptidyl-tRNA molecules trapped in stalled 50S ribosomal subunits, and thus maintains levels of free tRNAs and 50S ribosomes. The sequence is that of Peptidyl-tRNA hydrolase from Metamycoplasma arthritidis (strain 158L3-1) (Mycoplasma arthritidis).